The primary structure comprises 766 residues: MMSLLAVLCVLYVWSPAMLTGGLGSTLDSLPRKTVPIGSNGGRLFREEGIWNYTTMLLRDDLNLLILGAREAIFALDLDDITIKKAMLKWEVTRDQQNDCSNKGKDATNDCKNYIRILHKKNDGRMYVCGTKAFNPTCGYLSYADGKLTLEILQEDTKGKCPFDPFQRYTSAMVDGAYYSATSMNFRGSEPVMMRSTEESIRTEFTSTWLSEPNFIHMAHIPEGQSNPDGDDDKIYLFFSETAVEYESYTKVDVSRVARVCKGDLGGQRTLQKKWTSFLKARLDCQVPNTNLPLLVQDVFHLCPDDWTTCVFYAVFTPQSDSSQYSAVCSYKIEDIKTVFSKGKFKAPFNVETSFVKWVMYSGELPDPRPGACIDNHAREKGITKSLELPDKTLQFVKDKPLMDQAVTAEQPLLVKRGAAFTRIVVTTATALNGTSHQVMFIGTKSGSVLKAVNYNGEMVIMEEIQLFDPSEPIKILRLSSSKKQLYVGSEVGVVQLSISECGRYQTCLDCVLARDPHCGWDLDTEHCATINSIHRTRSSTVIQSLNDGDASQCPAIGVSKPVNISFYHGNTVKLGCQPYSNLAQVKWQFNGEPIKPSNTIQILSDGLMIFNASLDATGYYTCSSIETVSQRKYQTQHVAYDVKMWSESGTTASLHHVKEKERTLVAMVVILSLVLAALLIWNLYKGHLSLPCLHRRVKATQNRHEDDANQVQPQRLASSVVNFNSNNNHANDQRYSSSRETDRLSTTAGSTGQMSLKYIDDESEI.

An N-terminal signal peptide occupies residues 1-24 (MMSLLAVLCVLYVWSPAMLTGGLG). The Extracellular portion of the chain corresponds to 25 to 664 (STLDSLPRKT…LHHVKEKERT (640 aa)). The Sema domain maps to 27-499 (LDSLPRKTVP…SEVGVVQLSI (473 aa)). Residue asparagine 52 is glycosylated (N-linked (GlcNAc...) asparagine). Intrachain disulfides connect cysteine 100-cysteine 111, cysteine 129-cysteine 138, cysteine 261-cysteine 373, and cysteine 285-cysteine 329. An N-linked (GlcNAc...) asparagine glycan is attached at asparagine 433. The region spanning 501–552 (ECGRYQTCLDCVLARDPHCGWDLDTEHCATINSIHRTRSSTVIQSLNDGDAS) is the PSI domain. 2 disulfide bridges follow: cysteine 502/cysteine 519 and cysteine 511/cysteine 528. The 86-residue stretch at 555–640 (PAIGVSKPVN…QRKYQTQHVA (86 aa)) folds into the Ig-like C2-type domain. N-linked (GlcNAc...) asparagine glycosylation is found at asparagine 564 and asparagine 612. Cysteines 577 and 623 form a disulfide. The helical transmembrane segment at 665–685 (LVAMVVILSLVLAALLIWNLY) threads the bilayer. Over 686-766 (KGHLSLPCLH…LKYIDDESEI (81 aa)) the chain is Cytoplasmic. The segment at 724-750 (FNSNNNHANDQRYSSSRETDRLSTTAG) is disordered.

The protein belongs to the semaphorin family.

Its subcellular location is the membrane. This is Semaphorin-4E (sema4e) from Danio rerio (Zebrafish).